A 65-amino-acid polypeptide reads, in one-letter code: uncharacterized protein (65 aa).

Topologically, residues 1–20 (MRFSNCFNKFKFCIGTEKKY) are cytoplasmic. Residues 21-43 (SFPICTSTYTSFSLFACIWSIFI) traverse the membrane as a helical segment. The Extracellular segment spans residues 44–65 (HISLNKSFIYQKSWYYSFFQNR).

Its subcellular location is the host membrane. This is an uncharacterized protein from Acidianus sp. F28 (AFV-2).